The primary structure comprises 1054 residues: Kinesin-like protein KIN-7G (1054 aa).

Residues 17–341 (KIFVSVRLRP…LLFASCAKEV (325 aa)) form the Kinesin motor domain. Position 105–112 (105–112 (GQTSSGKT)) interacts with ATP. 2 coiled-coil regions span residues 350–425 (VMSD…IGEA) and 611–640 (TETAEEKEEKEETEEKEEEEEERVKEVSSV). Disordered regions lie at residues 600–648 (CEPE…KEKS) and 740–760 (ERAESNLKPSNSKRPPLPKHI). Acidic residues predominate over residues 613–631 (TAEEKEEKEETEEKEEEEE).

The protein belongs to the TRAFAC class myosin-kinesin ATPase superfamily. Kinesin family. KIN-7 subfamily.

The polypeptide is Kinesin-like protein KIN-7G (Arabidopsis thaliana (Mouse-ear cress)).